A 62-amino-acid chain; its full sequence is Large ribosomal subunit protein bL33c (62 aa).

Belongs to the bacterial ribosomal protein bL33 family.

The protein localises to the plastid. It localises to the chloroplast. This Cyanidioschyzon merolae (strain NIES-3377 / 10D) (Unicellular red alga) protein is Large ribosomal subunit protein bL33c.